The sequence spans 175 residues: Large ribosomal subunit protein uL10 (175 aa).

This sequence belongs to the universal ribosomal protein uL10 family. As to quaternary structure, part of the ribosomal stalk of the 50S ribosomal subunit. The N-terminus interacts with L11 and the large rRNA to form the base of the stalk. The C-terminus forms an elongated spine to which L12 dimers bind in a sequential fashion forming a multimeric L10(L12)X complex.

Its function is as follows. Forms part of the ribosomal stalk, playing a central role in the interaction of the ribosome with GTP-bound translation factors. The protein is Large ribosomal subunit protein uL10 of Psychrobacter arcticus (strain DSM 17307 / VKM B-2377 / 273-4).